The primary structure comprises 153 residues: 6,7-dimethyl-8-ribityllumazine synthase (153 aa).

Residues Phe22, 56–58, and 80–82 contribute to the 5-amino-6-(D-ribitylamino)uracil site; these read AFE and TVI. A (2S)-2-hydroxy-3-oxobutyl phosphate-binding site is contributed by 85 to 86; that stretch reads AT. Residue His88 is the Proton donor of the active site. Phe113 is a binding site for 5-amino-6-(D-ribitylamino)uracil. A (2S)-2-hydroxy-3-oxobutyl phosphate-binding site is contributed by Arg127.

The protein belongs to the DMRL synthase family.

It carries out the reaction (2S)-2-hydroxy-3-oxobutyl phosphate + 5-amino-6-(D-ribitylamino)uracil = 6,7-dimethyl-8-(1-D-ribityl)lumazine + phosphate + 2 H2O + H(+). Its pathway is cofactor biosynthesis; riboflavin biosynthesis; riboflavin from 2-hydroxy-3-oxobutyl phosphate and 5-amino-6-(D-ribitylamino)uracil: step 1/2. Functionally, catalyzes the formation of 6,7-dimethyl-8-ribityllumazine by condensation of 5-amino-6-(D-ribitylamino)uracil with 3,4-dihydroxy-2-butanone 4-phosphate. This is the penultimate step in the biosynthesis of riboflavin. The polypeptide is 6,7-dimethyl-8-ribityllumazine synthase (Clostridium perfringens (strain 13 / Type A)).